The following is a 358-amino-acid chain: Alanine racemase (358 aa).

The active-site Proton acceptor; specific for D-alanine is Lys-35. Lys-35 bears the N6-(pyridoxal phosphate)lysine mark. Residue Arg-130 coordinates substrate. The active-site Proton acceptor; specific for L-alanine is the Tyr-255. Met-303 contributes to the substrate binding site.

Belongs to the alanine racemase family. Pyridoxal 5'-phosphate serves as cofactor.

The enzyme catalyses L-alanine = D-alanine. Its pathway is amino-acid biosynthesis; D-alanine biosynthesis; D-alanine from L-alanine: step 1/1. In terms of biological role, catalyzes the interconversion of L-alanine and D-alanine. May also act on other amino acids. The chain is Alanine racemase (alr) from Shewanella baltica (strain OS195).